The primary structure comprises 281 residues: Shikimate dehydrogenase (NADP(+)) (281 aa).

Residues 19 to 21 (SFS) and Thr-66 contribute to the shikimate site. Catalysis depends on Lys-70, which acts as the Proton acceptor. Shikimate is bound by residues Asn-91 and Asp-104. NADP(+) is bound by residues 127–131 (GAGGA) and Ile-223. Residue Tyr-225 coordinates shikimate. Gly-246 serves as a coordination point for NADP(+).

This sequence belongs to the shikimate dehydrogenase family. In terms of assembly, homodimer.

The catalysed reaction is shikimate + NADP(+) = 3-dehydroshikimate + NADPH + H(+). It participates in metabolic intermediate biosynthesis; chorismate biosynthesis; chorismate from D-erythrose 4-phosphate and phosphoenolpyruvate: step 4/7. Its function is as follows. Involved in the biosynthesis of the chorismate, which leads to the biosynthesis of aromatic amino acids. Catalyzes the reversible NADPH linked reduction of 3-dehydroshikimate (DHSA) to yield shikimate (SA). The sequence is that of Shikimate dehydrogenase (NADP(+)) from Methanobrevibacter smithii (strain ATCC 35061 / DSM 861 / OCM 144 / PS).